The sequence spans 990 residues: MRSTSKAIPFSFHTSLIVQCLRPLRFTSAASPSSSSSSSSQWFGFLRNAITSSDLMLGKCTHARILTFEENPERFLINNLISMYSKCGSLTYARRVFDKMPDRDLVSWNSILAAYAQSSECVVENIQQAFLLFRILRQDVVYTSRMTLSPMLKLCLHSGYVWASESFHGYACKIGLDGDEFVAGALVNIYLKFGKVKEGKVLFEEMPYRDVVLWNLMLKAYLEMGFKEEAIDLSSAFHSSGLNPNEITLRLLARISGDDSDAGQVKSFANGNDASSVSEIIFRNKGLSEYLHSGQYSALLKCFADMVESDVECDQVTFILMLATAVKVDSLALGQQVHCMALKLGLDLMLTVSNSLINMYCKLRKFGFARTVFDNMSERDLISWNSVIAGIAQNGLEVEAVCLFMQLLRCGLKPDQYTMTSVLKAASSLPEGLSLSKQVHVHAIKINNVSDSFVSTALIDAYSRNRCMKEAEILFERHNFDLVAWNAMMAGYTQSHDGHKTLKLFALMHKQGERSDDFTLATVFKTCGFLFAINQGKQVHAYAIKSGYDLDLWVSSGILDMYVKCGDMSAAQFAFDSIPVPDDVAWTTMISGCIENGEEERAFHVFSQMRLMGVLPDEFTIATLAKASSCLTALEQGRQIHANALKLNCTNDPFVGTSLVDMYAKCGSIDDAYCLFKRIEMMNITAWNAMLVGLAQHGEGKETLQLFKQMKSLGIKPDKVTFIGVLSACSHSGLVSEAYKHMRSMHGDYGIKPEIEHYSCLADALGRAGLVKQAENLIESMSMEASASMYRTLLAACRVQGDTETGKRVATKLLELEPLDSSAYVLLSNMYAAASKWDEMKLARTMMKGHKVKKDPGFSWIEVKNKIHIFVVDDRSNRQTELIYRKVKDMIRDIKQEGYVPETDFTLVDVEEEEKERALYYHSEKLAVAFGLLSTPPSTPIRVIKNLRVCGDCHNAMKYIAKVYNREIVLRDANRFHRFKDGICSCGDYW.

PPR repeat units lie at residues E73–S107, N109–D139, S144–G178, D179–R209, D210–P244, E279–C313, D314–L348, M349–R379, D380–P414, D415–S450, D451–R477, D481–S515, D516–L550, D551–P581, D582–P616, D617–N651, D652–M682, N683–P717, D718–P753, and E754–S788. The interval M789–K864 is type E motif. Residues N865–K895 are type E(+) motif. The segment at Q896–W990 is type DYW motif.

It belongs to the PPR family. PCMP-H subfamily.

The chain is Pentatricopeptide repeat-containing protein At4g33170 (PCMP-H53) from Arabidopsis thaliana (Mouse-ear cress).